Consider the following 196-residue polypeptide: Segregation and condensation protein B (196 aa).

Belongs to the ScpB family. In terms of assembly, homodimer. Homodimerization may be required to stabilize the binding of ScpA to the Smc head domains. Component of a cohesin-like complex composed of ScpA, ScpB and the Smc homodimer, in which ScpA and ScpB bind to the head domain of Smc. The presence of the three proteins is required for the association of the complex with DNA.

It localises to the cytoplasm. Its function is as follows. Participates in chromosomal partition during cell division. May act via the formation of a condensin-like complex containing Smc and ScpA that pull DNA away from mid-cell into both cell halves. This Pediococcus pentosaceus (strain ATCC 25745 / CCUG 21536 / LMG 10740 / 183-1w) protein is Segregation and condensation protein B.